A 297-amino-acid polypeptide reads, in one-letter code: 4-hydroxy-tetrahydrodipicolinate synthase (297 aa).

Residue Thr47 coordinates pyruvate. Tyr135 functions as the Proton donor/acceptor in the catalytic mechanism. The active-site Schiff-base intermediate with substrate is Lys163. Ile205 is a pyruvate binding site.

Belongs to the DapA family. Homotetramer; dimer of dimers.

It is found in the cytoplasm. The enzyme catalyses L-aspartate 4-semialdehyde + pyruvate = (2S,4S)-4-hydroxy-2,3,4,5-tetrahydrodipicolinate + H2O + H(+). It functions in the pathway amino-acid biosynthesis; L-lysine biosynthesis via DAP pathway; (S)-tetrahydrodipicolinate from L-aspartate: step 3/4. Catalyzes the condensation of (S)-aspartate-beta-semialdehyde [(S)-ASA] and pyruvate to 4-hydroxy-tetrahydrodipicolinate (HTPA). The protein is 4-hydroxy-tetrahydrodipicolinate synthase of Dehalococcoides mccartyi (strain ATCC BAA-2100 / JCM 16839 / KCTC 5957 / BAV1).